The primary structure comprises 339 residues: Ribosomal RNA small subunit methyltransferase H (339 aa).

S-adenosyl-L-methionine is bound by residues 36-38, aspartate 55, phenylalanine 82, aspartate 103, and glutamine 110; that span reads GGY. Residues 286-319 form a disordered region; sequence GPIGPSEAEATANPRARSAKLRAGERTDAPIPEP.

This sequence belongs to the methyltransferase superfamily. RsmH family.

The protein localises to the cytoplasm. The enzyme catalyses cytidine(1402) in 16S rRNA + S-adenosyl-L-methionine = N(4)-methylcytidine(1402) in 16S rRNA + S-adenosyl-L-homocysteine + H(+). Functionally, specifically methylates the N4 position of cytidine in position 1402 (C1402) of 16S rRNA. This chain is Ribosomal RNA small subunit methyltransferase H, found in Methylobacterium nodulans (strain LMG 21967 / CNCM I-2342 / ORS 2060).